A 444-amino-acid chain; its full sequence is Presenilin sel-12 (444 aa).

The Cytoplasmic segment spans residues 1-45 (MPSTRRQQEGGGADAETHTVYGTNLITNRNSQEDENVVEEAELKY). Residues 46–66 (GASHVIHLFVPVSLCMALVVF) traverse the membrane as a helical segment. Topologically, residues 67–101 (TMNTITFYSQNNGRHLLYTPFVRETDSIVEKGLMS) are lumenal. Residues 102–122 (LGNALVMLCVVVLMTVLLIVF) traverse the membrane as a helical segment. Topologically, residues 123-130 (YKYKFYKL) are cytoplasmic. Residues 131-151 (IHGWLIVSSFLLLFLFTTIYV) form a helical membrane-spanning segment. The Lumenal portion of the chain corresponds to 152–163 (QEVLKSFDVSPS). Residues 164–184 (ALLVLFGLGNYGVLGMMCIHW) form a helical membrane-spanning segment. Topologically, residues 185–189 (KGPLR) are cytoplasmic. The helical transmembrane segment at 190-210 (LQQFYLITMSALMALVFIKYL) threads the bilayer. The Lumenal segment spans residues 211–212 (PE). The helical transmembrane segment at 213–233 (WTVWFVLFVISVWDLVAVLTP) threads the bilayer. Asp226 is an active-site residue. Residues 234 to 359 (KGPLRYLVET…RHEEEERGVK (126 aa)) lie on the Cytoplasmic side of the membrane. Residues 275–331 (TDPREPTSSDSNTSTAFPGEASCSSETPKRPKVKRIPQKVQIESNTTASTTQNSGVR) are disordered. Polar residues-rich tracts occupy residues 282–300 (SSDS…CSSE) and 315–329 (QIES…QNSG). A helical transmembrane segment spans residues 360–380 (LGLGDFIFYSVLLGKASSYFD). Residue Asp364 is part of the active site. Residues 381–384 (WNTT) lie on the Lumenal side of the membrane. The chain crosses the membrane as a helical span at residues 385 to 405 (IACYVAILIGLCFTLVLLAVF). The Cytoplasmic segment spans residues 406–413 (KRALPALP). A PAL motif is present at residues 410–412 (PAL). Residues 414 to 434 (ISIFSGLIFYFCTRWIITPFV) constitute an intramembrane region (helical). Residues 435 to 444 (TQVSQKCLLY) lie on the Cytoplasmic side of the membrane.

It belongs to the peptidase A22A family. In terms of assembly, homodimer. Component of the gamma-secretase complex, a complex probably composed of the presenilin homodimer (sel-12, hop-1 or spe-4), nicastrin (aph-2), aph-1 and pen-2. Interacts with sel-10. In terms of tissue distribution, expressed in most neurons.

It localises to the endoplasmic reticulum membrane. The protein localises to the golgi apparatus membrane. Functionally, probable catalytic subunit of the gamma-secretase complex, an endoprotease complex that catalyzes the intramembrane cleavage of integral membrane proteins such as Notch receptors (lin-12 or glp-1). Provides the major presenilin function compared to hop-1 and spe-4. Required cell-autonomously for correct neurite connectivity of the AIY cholinergic interneurons and their correct functioning in thermotaxis. Required for mesodermal patterning of muscle function. Promotes basement membrane gap formation during tissue remodeling. The sequence is that of Presenilin sel-12 from Caenorhabditis elegans.